Here is a 424-residue protein sequence, read N- to C-terminus: Putative polyketide beta-ketoacyl synthase 2 (424 aa).

The Ketosynthase family 3 (KS3) domain maps to 13–416; it reads SRRAVVTGLG…GSNSALVLRR (404 aa).

Belongs to the thiolase-like superfamily. Beta-ketoacyl-ACP synthases family.

Involved in developmentally regulated synthesis of a compound biosynthetically related to polyketide antibiotics which is essential for spore color in Streptomyces coelicolor. The chain is Putative polyketide beta-ketoacyl synthase 2 from Streptomyces coelicolor (strain ATCC BAA-471 / A3(2) / M145).